The primary structure comprises 423 residues: Serine--tRNA ligase (423 aa).

An L-serine-binding site is contributed by 231 to 233; that stretch reads TAE. Residue 262-264 coordinates ATP; that stretch reads RSE. Glutamate 285 is a binding site for L-serine. Residue 349-352 participates in ATP binding; that stretch reads EISS. Serine 384 contacts L-serine.

This sequence belongs to the class-II aminoacyl-tRNA synthetase family. Type-1 seryl-tRNA synthetase subfamily. In terms of assembly, homodimer. The tRNA molecule binds across the dimer.

Its subcellular location is the cytoplasm. The enzyme catalyses tRNA(Ser) + L-serine + ATP = L-seryl-tRNA(Ser) + AMP + diphosphate + H(+). The catalysed reaction is tRNA(Sec) + L-serine + ATP = L-seryl-tRNA(Sec) + AMP + diphosphate + H(+). It participates in aminoacyl-tRNA biosynthesis; selenocysteinyl-tRNA(Sec) biosynthesis; L-seryl-tRNA(Sec) from L-serine and tRNA(Sec): step 1/1. In terms of biological role, catalyzes the attachment of serine to tRNA(Ser). Is also able to aminoacylate tRNA(Sec) with serine, to form the misacylated tRNA L-seryl-tRNA(Sec), which will be further converted into selenocysteinyl-tRNA(Sec). The polypeptide is Serine--tRNA ligase (Lactococcus lactis subsp. lactis (strain IL1403) (Streptococcus lactis)).